The chain runs to 108 residues: Acid stress chaperone HdeB (108 aa).

The first 29 residues, 1–29 (MNISSLRKAFIFMGAVAALSLVNAQSALA), serve as a signal peptide directing secretion. Position 93 is an N6-acetyllysine (K93).

The protein belongs to the HdeB family.

It is found in the periplasm. In terms of biological role, required for optimal acid stress protection, which is important for survival of enteric bacteria in the acidic environment of the host stomach. Exhibits a chaperone-like activity at acidic pH by preventing the aggregation of many different periplasmic proteins. This chain is Acid stress chaperone HdeB, found in Escherichia coli O6:H1 (strain CFT073 / ATCC 700928 / UPEC).